A 223-amino-acid polypeptide reads, in one-letter code: Putative PAN domain-containing protein R486 (223 aa).

Positions 1 to 23 (MSQTAIIIWIVVIIILLVLGGLG) are cleaved as a signal peptide. The tract at residues 39–73 (PTPINPPSSITPIQPINPPSSITPIQPSGPPSGGN) is disordered. Low complexity predominate over residues 45 to 64 (PSSITPIQPINPPSSITPIQ). PAN domains are found at residues 80–155 (CPAY…EDGC) and 159–223 (ARYN…KMPH). 2 disulfides stabilise this stretch: Cys-80–Cys-155 and Cys-109–Cys-131. N-linked (GlcNAc...) asparagine; by host glycans are attached at residues Asn-162, Asn-189, and Asn-213. Cys-182 and Cys-204 are disulfide-bonded.

It is found in the secreted. Its subcellular location is the virion. This Acanthamoeba polyphaga mimivirus (APMV) protein is Putative PAN domain-containing protein R486.